Consider the following 159-residue polypeptide: Ribosomal RNA large subunit methyltransferase H (159 aa).

S-adenosyl-L-methionine contacts are provided by residues L76, G108, and 127-132; that span reads FSKMTF.

It belongs to the RNA methyltransferase RlmH family. In terms of assembly, homodimer.

The protein localises to the cytoplasm. The catalysed reaction is pseudouridine(1915) in 23S rRNA + S-adenosyl-L-methionine = N(3)-methylpseudouridine(1915) in 23S rRNA + S-adenosyl-L-homocysteine + H(+). Specifically methylates the pseudouridine at position 1915 (m3Psi1915) in 23S rRNA. This chain is Ribosomal RNA large subunit methyltransferase H, found in Bacillus subtilis (strain 168).